We begin with the raw amino-acid sequence, 146 residues long: Ribosome maturation factor RimP (146 aa).

Belongs to the RimP family.

It is found in the cytoplasm. Its function is as follows. Required for maturation of 30S ribosomal subunits. This Helicobacter pylori (strain P12) protein is Ribosome maturation factor RimP.